A 380-amino-acid chain; its full sequence is MAKRDYYEILGVSKNATKEEIKKAYRKLSKKYHPDVNKEPDAAEKFKEIKEAYEVLSDDQKRAHYDQFGQADPNQGFGGFRSDDFDLGGFSGFGGFEDIFNTFFGGGRRRNPNAPRAGADLQYTMTLTFEEAAFGKETDIEIPSEETCNTCHGTGAKPGTKPETCPHCHGAGQISTEQSTPFGRIVNRRTCPYCGGTGQYIKEKCTTCGGTGRVKRRKKIHVKIPAGIDDGQQLRVAGQGERGLTVGRREIYILSFMWSRMSFLNVTAMIFIAKCRLRLRKLRLGMKSKSRPFTGKLKLKIPAGTQTGTRLRLKGKGVPNVRGYGYGDQHVIVRVVTPTKLTEKQKQLLREFDQLGGSSMHHEPHDRFFDKVKKAFKPES.

The J domain occupies Asp5–Gly69. The CR-type zinc-finger motif lies at Gly135–Arg217. The Zn(2+) site is built by Cys148, Cys151, Cys165, Cys168, Cys191, Cys194, Cys205, and Cys208. CXXCXGXG motif repeat units lie at residues Cys148–Gly155, Cys165–Gly172, Cys191–Gly198, and Cys205–Gly212.

Belongs to the DnaJ family. In terms of assembly, homodimer. Zn(2+) serves as cofactor.

The protein localises to the cytoplasm. Its function is as follows. Participates actively in the response to hyperosmotic and heat shock by preventing the aggregation of stress-denatured proteins and by disaggregating proteins, also in an autonomous, DnaK-independent fashion. Unfolded proteins bind initially to DnaJ; upon interaction with the DnaJ-bound protein, DnaK hydrolyzes its bound ATP, resulting in the formation of a stable complex. GrpE releases ADP from DnaK; ATP binding to DnaK triggers the release of the substrate protein, thus completing the reaction cycle. Several rounds of ATP-dependent interactions between DnaJ, DnaK and GrpE are required for fully efficient folding. Also involved, together with DnaK and GrpE, in the DNA replication of plasmids through activation of initiation proteins. In Geobacillus stearothermophilus (Bacillus stearothermophilus), this protein is Chaperone protein DnaJ.